The sequence spans 175 residues: NADH-ubiquinone oxidoreductase chain 6 (175 aa).

6 helical membrane-spanning segments follow: residues 1-21 (MMTY…IGSP), 25-45 (SPIY…GMVL), 47-67 (FGGS…MLVV), 88-108 (VVLG…LYVL), 115-137 (LVFK…GVFS), and 149-169 (YGVW…VVIM).

It belongs to the complex I subunit 6 family. In terms of assembly, core subunit of respiratory chain NADH dehydrogenase (Complex I) which is composed of 45 different subunits.

Its subcellular location is the mitochondrion inner membrane. The enzyme catalyses a ubiquinone + NADH + 5 H(+)(in) = a ubiquinol + NAD(+) + 4 H(+)(out). Core subunit of the mitochondrial membrane respiratory chain NADH dehydrogenase (Complex I) which catalyzes electron transfer from NADH through the respiratory chain, using ubiquinone as an electron acceptor. Essential for the catalytic activity and assembly of complex I. The polypeptide is NADH-ubiquinone oxidoreductase chain 6 (MT-ND6) (Hippopotamus amphibius (Hippopotamus)).